Consider the following 34-residue polypeptide: Photosystem II reaction center protein M (34 aa).

The chain crosses the membrane as a helical span at residues 5–25; it reads ILAFIATALFILVPTAFLLII.

Belongs to the PsbM family. In terms of assembly, PSII is composed of 1 copy each of membrane proteins PsbA, PsbB, PsbC, PsbD, PsbE, PsbF, PsbH, PsbI, PsbJ, PsbK, PsbL, PsbM, PsbT, PsbX, PsbY, PsbZ, Psb30/Ycf12, at least 3 peripheral proteins of the oxygen-evolving complex and a large number of cofactors. It forms dimeric complexes.

It localises to the plastid. Its subcellular location is the chloroplast thylakoid membrane. One of the components of the core complex of photosystem II (PSII). PSII is a light-driven water:plastoquinone oxidoreductase that uses light energy to abstract electrons from H(2)O, generating O(2) and a proton gradient subsequently used for ATP formation. It consists of a core antenna complex that captures photons, and an electron transfer chain that converts photonic excitation into a charge separation. This subunit is found at the monomer-monomer interface. In Cucumis sativus (Cucumber), this protein is Photosystem II reaction center protein M.